A 542-amino-acid polypeptide reads, in one-letter code: CTP synthase (542 aa).

The interval 1 to 265 is amidoligase domain; sequence MARYVFITGG…DSEVLSAFGI (265 aa). A CTP-binding site is contributed by Ser-13. Position 13 (Ser-13) interacts with UTP. Residue 14-19 coordinates ATP; it reads SLGKGI. Position 54 (Tyr-54) interacts with L-glutamine. Asp-71 contributes to the ATP binding site. Mg(2+) contacts are provided by Asp-71 and Glu-139. Residues 146–148, 186–191, and Lys-222 contribute to the CTP site; these read DIE and KTKPTQ. Residues 186–191 and Lys-222 each bind UTP; that span reads KTKPTQ. A Glutamine amidotransferase type-1 domain is found at 291–541; sequence TIAVVGKYTG…IEAAIEQSRL (251 aa). Gly-353 contributes to the L-glutamine binding site. Cys-380 functions as the Nucleophile; for glutamine hydrolysis in the catalytic mechanism. Residues 381–384, Glu-404, and Arg-469 contribute to the L-glutamine site; that span reads FGMQ. Residues His-514 and Glu-516 contribute to the active site.

The protein belongs to the CTP synthase family. In terms of assembly, homotetramer.

It catalyses the reaction UTP + L-glutamine + ATP + H2O = CTP + L-glutamate + ADP + phosphate + 2 H(+). The enzyme catalyses L-glutamine + H2O = L-glutamate + NH4(+). The catalysed reaction is UTP + NH4(+) + ATP = CTP + ADP + phosphate + 2 H(+). Its pathway is pyrimidine metabolism; CTP biosynthesis via de novo pathway; CTP from UDP: step 2/2. With respect to regulation, allosterically activated by GTP, when glutamine is the substrate; GTP has no effect on the reaction when ammonia is the substrate. The allosteric effector GTP functions by stabilizing the protein conformation that binds the tetrahedral intermediate(s) formed during glutamine hydrolysis. Inhibited by the product CTP, via allosteric rather than competitive inhibition. Catalyzes the ATP-dependent amination of UTP to CTP with either L-glutamine or ammonia as the source of nitrogen. Regulates intracellular CTP levels through interactions with the four ribonucleotide triphosphates. This Brucella abortus (strain 2308) protein is CTP synthase.